A 374-amino-acid polypeptide reads, in one-letter code: Severin (374 aa).

3 Gelsolin-like repeats span residues 58–109, 180–220, and 278–369; these read FTLE…DEYG, EGKT…KCSA, and EVIK…SFLK.

The protein belongs to the villin/gelsolin family.

In terms of biological role, severin blocks the ends of F-actin and causes the fragmentation and depolymerization of actin filaments. This severin binds stably with actin both in a Ca(2+) dependent and a Ca(2+) independent manner. This is Severin (AG8) from Echinococcus granulosus (Hydatid tapeworm).